Consider the following 367-residue polypeptide: Chorismate synthase (367 aa).

Residues 41-60 (FTHDLQRRASGKSRHTSARR) are disordered. Positions 48 and 54 each coordinate NADP(+). FMN is bound by residues 125 to 127 (RSS), 238 to 239 (NA), glycine 278, 293 to 297 (KPTSS), and arginine 319.

The protein belongs to the chorismate synthase family. In terms of assembly, homotetramer. Requires FMNH2 as cofactor.

It carries out the reaction 5-O-(1-carboxyvinyl)-3-phosphoshikimate = chorismate + phosphate. Its pathway is metabolic intermediate biosynthesis; chorismate biosynthesis; chorismate from D-erythrose 4-phosphate and phosphoenolpyruvate: step 7/7. Catalyzes the anti-1,4-elimination of the C-3 phosphate and the C-6 proR hydrogen from 5-enolpyruvylshikimate-3-phosphate (EPSP) to yield chorismate, which is the branch point compound that serves as the starting substrate for the three terminal pathways of aromatic amino acid biosynthesis. This reaction introduces a second double bond into the aromatic ring system. This is Chorismate synthase from Xanthomonas euvesicatoria pv. vesicatoria (strain 85-10) (Xanthomonas campestris pv. vesicatoria).